A 219-amino-acid chain; its full sequence is uncharacterized protein (219 aa).

The N-terminal stretch at 1–17 is a signal peptide; it reads MFKKIIILFLGIFLLSS. The N-palmitoyl cysteine moiety is linked to residue Cys-18. Cys-18 is lipidated: S-diacylglycerol cysteine. The segment at 110–136 is disordered; the sequence is KAESNATQSNNDMTLSKANKKVRKDDS. Residues 112 to 126 are compositionally biased toward polar residues; sequence ESNATQSNNDMTLSK. A coiled-coil region spans residues 137 to 165; that stretch reads YKEKKIEEELNQIKAMLRETKRDITKYTC.

Its subcellular location is the cell membrane. This is an uncharacterized protein from Rickettsia prowazekii (strain Madrid E).